The chain runs to 610 residues: Menin (610 aa).

The interaction with FANCD2 stretch occupies residues 214 to 390 (GVAERSWLYL…SLLEAGEERP (177 aa)). The disordered stretch occupies residues 460 to 552 (REAEAAEAEE…SPPPEGPVLT (93 aa)). Over residues 484 to 500 (RRESKPEEPPPPKKPAL) the composition is skewed to basic and acidic residues. Ser487 and Ser543 each carry phosphoserine. Position 594 is a phosphothreonine (Thr594).

As to quaternary structure, component of the MLL-HCF complex, at least composed of KMT2A/MLL1, MEN1, ASH2L, RBBP5, DPY30, WDR5, HCFC1 and HCFC2. Component of the menin-associated histone methyltransferase complex, at least composed of KMT2B/MLL4, MEN1, ASH2L, RBBP5, DPY30 and WDR5. Interacts with POLR2B. Interacts with POLR2A phosphorylated at 'Ser-5', but not with the unphosphorylated, nor 'Ser-2' phosphorylated POLR2A forms. Interacts with FANCD2 and DBF4. Interacts with SMAD3, but not with SMAD2, nor SMAD4. Directly interacts with NFKB1, NFKB2 and RELA. Interacts with JUND (via MBM motif); inhibits the interaction of JUND with MAPK10 and the phosphorylation of JUND by MAP kinases MAPK8 and MAPK10. Interacts with KMT2A (via MBM motif). The KMT2A-MEN1 complex interacts with PSIP1 with a greater affinity as MEN1 enhances interaction of KMT2A with PSIP1. In terms of tissue distribution, widely expressed, including in the pituitary, brain, large intestine, spleen, kidney, adrenal gland, ovary, testis, thymus, lung, epididymis, bone marrow, pancreatic islets and placenta.

It is found in the nucleus. Essential component of a MLL/SET1 histone methyltransferase (HMT) complex, a complex that specifically methylates 'Lys-4' of histone H3 (H3K4). Functions as a transcriptional regulator. Binds to the TERT promoter and represses telomerase expression. Represses JUND-mediated transcriptional activation on AP1 sites, as well as that mediated by NFKB subunit RELA. Positively regulates HOXC8 and HOXC6 gene expression. May be involved in normal hematopoiesis through the activation of HOXA9 expression. May be involved in DNA repair. Plays a role in TGFB1-mediated inhibition of cell-proliferation, possibly regulating SMAD3 transcriptional activity. This chain is Menin (Men1), found in Rattus norvegicus (Rat).